A 289-amino-acid polypeptide reads, in one-letter code: Pantothenate synthetase (289 aa).

30-37 (MGYLHKGH) contributes to the ATP binding site. H37 functions as the Proton donor in the catalytic mechanism. Q61 provides a ligand contact to (R)-pantoate. Q61 serves as a coordination point for beta-alanine. ATP is bound at residue 147-150 (GEKD). Q153 provides a ligand contact to (R)-pantoate. ATP-binding positions include V176 and 184–187 (CSSR).

This sequence belongs to the pantothenate synthetase family. Homodimer.

The protein resides in the cytoplasm. The catalysed reaction is (R)-pantoate + beta-alanine + ATP = (R)-pantothenate + AMP + diphosphate + H(+). It functions in the pathway cofactor biosynthesis; (R)-pantothenate biosynthesis; (R)-pantothenate from (R)-pantoate and beta-alanine: step 1/1. Functionally, catalyzes the condensation of pantoate with beta-alanine in an ATP-dependent reaction via a pantoyl-adenylate intermediate. The chain is Pantothenate synthetase from Brucella anthropi (strain ATCC 49188 / DSM 6882 / CCUG 24695 / JCM 21032 / LMG 3331 / NBRC 15819 / NCTC 12168 / Alc 37) (Ochrobactrum anthropi).